The following is a 158-amino-acid chain: Transcriptional repressor NrdR (158 aa).

The segment at 3-34 (CPFCSFPESRVLDSRPADEGNSIRRRRECGEC) is a zinc-finger region. In terms of domain architecture, ATP-cone spans 49–139 (LVVVKKDGRR…VYRQFGDIYS (91 aa)).

This sequence belongs to the NrdR family. Zn(2+) is required as a cofactor.

Negatively regulates transcription of bacterial ribonucleotide reductase nrd genes and operons by binding to NrdR-boxes. The protein is Transcriptional repressor NrdR of Desulforamulus reducens (strain ATCC BAA-1160 / DSM 100696 / MI-1) (Desulfotomaculum reducens).